The chain runs to 77 residues: Large ribosomal subunit protein bL28 (77 aa).

This sequence belongs to the bacterial ribosomal protein bL28 family.

The chain is Large ribosomal subunit protein bL28 from Cupriavidus necator (strain ATCC 17699 / DSM 428 / KCTC 22496 / NCIMB 10442 / H16 / Stanier 337) (Ralstonia eutropha).